The chain runs to 102 residues: Co-chaperonin GroES (102 aa).

It belongs to the GroES chaperonin family. As to quaternary structure, heptamer of 7 subunits arranged in a ring. Interacts with the chaperonin GroEL.

It is found in the cytoplasm. In terms of biological role, together with the chaperonin GroEL, plays an essential role in assisting protein folding. The GroEL-GroES system forms a nano-cage that allows encapsulation of the non-native substrate proteins and provides a physical environment optimized to promote and accelerate protein folding. GroES binds to the apical surface of the GroEL ring, thereby capping the opening of the GroEL channel. This Vibrio harveyi (Beneckea harveyi) protein is Co-chaperonin GroES.